The sequence spans 340 residues: Sulfotransferase ppzF (340 aa).

Its pathway is secondary metabolite biosynthesis. Functionally, sulfotransferase; part of the gene cluster that mediates the biosynthesis of pyrrolopyrazines, secondary metabolites showing insecticidal activity. The role of ppzF within the pathway has still to be determined. The single multifunctional NRPS ppzA is sufficient to produce peramine via condensation of 1-pyrroline-5-carboxylate and arginine, N-methylation of the alpha-amino group of arginine and reduction of the thioester and the cyclization to form an iminium ion resulting in release from the peptide synthetase. Deprotonation of this intermediate and oxidation of the pyrroline ring would give rise to peramine. In Epichloe species that produce only peramine, the peramine synthetase gene is not localized in a gene cluster, in contrast to Metarhizium species that contain additional pyrrolopyrazine biosynthesis genes. The 2-oxoglutarate-Fe(II) type oxidoreductase ppzC hydroxylates peramine to yield the newly identified compound 8-hydroxyperamine whereas ppzD converts L-proline into trans-4-hydroxy-L-proline, a precursor of peramine biosynthesis. The protein is Sulfotransferase ppzF of Metarhizium rileyi (strain RCEF 4871) (Nomuraea rileyi).